Here is a 299-residue protein sequence, read N- to C-terminus: GTPase Era (299 aa).

One can recognise an Era-type G domain in the interval 5–175 (RSGFVCFVGR…TDVLAGKLPP (171 aa)). The interval 13–20 (GRPNTGKS) is G1. 13 to 20 (GRPNTGKS) serves as a coordination point for GTP. The interval 39 to 43 (QTTRH) is G2. A G3 region spans residues 60 to 63 (DTPG). Residues 60–64 (DTPGL) and 124–127 (TKID) each bind GTP. Residues 124-127 (TKID) form a G4 region. The interval 154–156 (VSA) is G5. The KH type-2 domain maps to 206-285 (VRDELPHSLA…YLDLRVKIAK (80 aa)).

It belongs to the TRAFAC class TrmE-Era-EngA-EngB-Septin-like GTPase superfamily. Era GTPase family. As to quaternary structure, monomer.

It localises to the cell envelope. The protein resides in the secreted. It is found in the cell wall. In terms of biological role, exhibits GTPase activity. Binds RNA but is probably not involved in ribosome assembly in mycobacteria. The chain is GTPase Era from Mycobacterium sp. (strain JLS).